Consider the following 357-residue polypeptide: Chorismate synthase (357 aa).

Arginine 46 contacts NADP(+). FMN is bound by residues 123–125 (RSS), 235–236 (NA), glycine 275, 290–294 (KPTPS), and arginine 316.

The protein belongs to the chorismate synthase family. In terms of assembly, homotetramer. The cofactor is FMNH2.

The catalysed reaction is 5-O-(1-carboxyvinyl)-3-phosphoshikimate = chorismate + phosphate. The protein operates within metabolic intermediate biosynthesis; chorismate biosynthesis; chorismate from D-erythrose 4-phosphate and phosphoenolpyruvate: step 7/7. In terms of biological role, catalyzes the anti-1,4-elimination of the C-3 phosphate and the C-6 proR hydrogen from 5-enolpyruvylshikimate-3-phosphate (EPSP) to yield chorismate, which is the branch point compound that serves as the starting substrate for the three terminal pathways of aromatic amino acid biosynthesis. This reaction introduces a second double bond into the aromatic ring system. The sequence is that of Chorismate synthase from Nitratiruptor sp. (strain SB155-2).